Here is a 117-residue protein sequence, read N- to C-terminus: Hydrogenase maturation factor HypA (117 aa).

A Ni(2+)-binding site is contributed by His2. 4 residues coordinate Zn(2+): Cys73, Cys76, Cys89, and Cys92.

This sequence belongs to the HypA/HybF family.

Its function is as follows. Involved in the maturation of [NiFe] hydrogenases. Required for nickel insertion into the metal center of the hydrogenase. The protein is Hydrogenase maturation factor HypA of Shewanella baltica (strain OS195).